Consider the following 125-residue polypeptide: Cyclin-dependent protein kinase inhibitor SMR16 (125 aa).

In terms of biological role, probable cyclin-dependent protein kinase (CDK) inhibitor that functions as a repressor of mitosis in the endoreduplication cell cycle. The sequence is that of Cyclin-dependent protein kinase inhibitor SMR16 from Arabidopsis thaliana (Mouse-ear cress).